The following is a 188-amino-acid chain: Probable chorismate pyruvate-lyase (188 aa).

The substrate site is built by Arg-77, Leu-115, and Glu-174.

It belongs to the UbiC family.

The protein resides in the cytoplasm. The catalysed reaction is chorismate = 4-hydroxybenzoate + pyruvate. It participates in cofactor biosynthesis; ubiquinone biosynthesis. Removes the pyruvyl group from chorismate, with concomitant aromatization of the ring, to provide 4-hydroxybenzoate (4HB) for the ubiquinone pathway. The sequence is that of Probable chorismate pyruvate-lyase from Shewanella loihica (strain ATCC BAA-1088 / PV-4).